The chain runs to 304 residues: Ribonuclease Z (304 aa).

Zn(2+) contacts are provided by His-63, His-65, Asp-67, His-68, His-143, Asp-213, and His-271. The active-site Proton acceptor is Asp-67.

The protein belongs to the RNase Z family. Homodimer. It depends on Zn(2+) as a cofactor.

The enzyme catalyses Endonucleolytic cleavage of RNA, removing extra 3' nucleotides from tRNA precursor, generating 3' termini of tRNAs. A 3'-hydroxy group is left at the tRNA terminus and a 5'-phosphoryl group is left at the trailer molecule.. Zinc phosphodiesterase, which displays some tRNA 3'-processing endonuclease activity. Probably involved in tRNA maturation, by removing a 3'-trailer from precursor tRNA. The polypeptide is Ribonuclease Z (Bacteroides fragilis (strain ATCC 25285 / DSM 2151 / CCUG 4856 / JCM 11019 / LMG 10263 / NCTC 9343 / Onslow / VPI 2553 / EN-2)).